The primary structure comprises 397 residues: Tryptophan synthase beta chain (397 aa).

K87 is modified (N6-(pyridoxal phosphate)lysine).

Belongs to the TrpB family. Tetramer of two alpha and two beta chains. It depends on pyridoxal 5'-phosphate as a cofactor.

It catalyses the reaction (1S,2R)-1-C-(indol-3-yl)glycerol 3-phosphate + L-serine = D-glyceraldehyde 3-phosphate + L-tryptophan + H2O. Its pathway is amino-acid biosynthesis; L-tryptophan biosynthesis; L-tryptophan from chorismate: step 5/5. The beta subunit is responsible for the synthesis of L-tryptophan from indole and L-serine. The protein is Tryptophan synthase beta chain of Cronobacter sakazakii (strain ATCC BAA-894) (Enterobacter sakazakii).